The primary structure comprises 63 residues: Large ribosomal subunit protein bL32 (63 aa).

Residues 1-23 form a disordered region; it reads MATPKAKVSKSRRDKRRAQFTAR. The span at 7-18 shows a compositional bias: basic residues; the sequence is KVSKSRRDKRRA.

The protein belongs to the bacterial ribosomal protein bL32 family.

The sequence is that of Large ribosomal subunit protein bL32 from Prosthecochloris aestuarii (strain DSM 271 / SK 413).